A 469-amino-acid chain; its full sequence is tRNA-2-methylthio-N(6)-dimethylallyladenosine synthase (469 aa).

In terms of domain architecture, MTTase N-terminal spans 22–142; that stretch reads RKVFIKTYGC…LPEALRRAKE (121 aa). [4Fe-4S] cluster-binding residues include C31, C67, C105, C183, C187, and C190. Residues 169 to 401 enclose the Radical SAM core domain; sequence RARGVTAFLT…QALLLKQQQE (233 aa). A TRAM domain is found at 404 to 466; that stretch reads ESCIGKEIDL…TNSLFAERAE (63 aa).

It belongs to the methylthiotransferase family. MiaB subfamily. In terms of assembly, monomer. It depends on [4Fe-4S] cluster as a cofactor.

The protein localises to the cytoplasm. The catalysed reaction is N(6)-dimethylallyladenosine(37) in tRNA + (sulfur carrier)-SH + AH2 + 2 S-adenosyl-L-methionine = 2-methylsulfanyl-N(6)-dimethylallyladenosine(37) in tRNA + (sulfur carrier)-H + 5'-deoxyadenosine + L-methionine + A + S-adenosyl-L-homocysteine + 2 H(+). Catalyzes the methylthiolation of N6-(dimethylallyl)adenosine (i(6)A), leading to the formation of 2-methylthio-N6-(dimethylallyl)adenosine (ms(2)i(6)A) at position 37 in tRNAs that read codons beginning with uridine. The polypeptide is tRNA-2-methylthio-N(6)-dimethylallyladenosine synthase (Rhizobium etli (strain ATCC 51251 / DSM 11541 / JCM 21823 / NBRC 15573 / CFN 42)).